The chain runs to 128 residues: 3-aminoacrylate deaminase RutC (128 aa).

The protein belongs to the RutC family.

It catalyses the reaction (Z)-3-aminoacrylate + H2O + H(+) = 3-oxopropanoate + NH4(+). Its function is as follows. Involved in pyrimidine catabolism. Catalyzes the deamination of 3-aminoacrylate to malonic semialdehyde, a reaction that can also occur spontaneously. RutC may facilitate the reaction and modulate the metabolic fitness, rather than catalyzing essential functions. This chain is 3-aminoacrylate deaminase RutC, found in Enterobacter sp. (strain 638).